The sequence spans 901 residues: HTH-type transcriptional regulator MalT (901 aa).

39-46 (SPAGYGKT) serves as a coordination point for ATP. Residues 829 to 894 (ELIHTSPLTQ…AAVQHAQKLL (66 aa)) enclose the HTH luxR-type domain. A DNA-binding region (H-T-H motif) is located at residues 853–872 (NEQIAGELEVAATTIKTHIR).

Belongs to the MalT family. As to quaternary structure, monomer in solution. Oligomerizes to an active state in the presence of the positive effectors ATP and maltotriose.

Its activity is regulated as follows. Activated by ATP and maltotriose, which are both required for DNA binding. In terms of biological role, positively regulates the transcription of the maltose regulon whose gene products are responsible for uptake and catabolism of malto-oligosaccharides. Specifically binds to the promoter region of its target genes, recognizing a short DNA motif called the MalT box. This chain is HTH-type transcriptional regulator MalT, found in Shigella sonnei (strain Ss046).